We begin with the raw amino-acid sequence, 541 residues long: Chaperonin GroEL 2 (541 aa).

ATP-binding positions include 29-32 (TLGP), 86-90 (DGTTT), Gly-413, 476-478 (NAA), and Asp-492.

The protein belongs to the chaperonin (HSP60) family. As to quaternary structure, forms a cylinder of 14 subunits composed of two heptameric rings stacked back-to-back. Interacts with the co-chaperonin GroES.

The protein resides in the secreted. Its subcellular location is the capsule. It localises to the cell surface. The protein localises to the cell wall. The enzyme catalyses ATP + H2O + a folded polypeptide = ADP + phosphate + an unfolded polypeptide.. Functionally, together with its co-chaperonin GroES, plays an essential role in assisting protein folding. The GroEL-GroES system forms a nano-cage that allows encapsulation of the non-native substrate proteins and provides a physical environment optimized to promote and accelerate protein folding. The chain is Chaperonin GroEL 2 from Mycobacterium leprae (strain TN).